Consider the following 381-residue polypeptide: L-lactate dehydrogenase (381 aa).

One can recognise an FMN hydroxy acid dehydrogenase domain in the interval 1–380; sequence MIISASTDYR…SADSLVRELG (380 aa). Substrate is bound at residue Tyr24. FMN is bound by residues Ser106 and Gln127. Tyr129 serves as a coordination point for substrate. FMN is bound at residue Thr155. Arg164 serves as a coordination point for substrate. Position 251 (Lys251) interacts with FMN. His275 (proton acceptor) is an active-site residue. Position 278 (Arg278) interacts with substrate. 306 to 330 is an FMN binding site; the sequence is DSGIRTGLDVVRMIALGADSVLLGR.

Belongs to the FMN-dependent alpha-hydroxy acid dehydrogenase family. In terms of assembly, homotetramer. The cofactor is FMN.

The protein resides in the cell inner membrane. It catalyses the reaction (S)-lactate + A = pyruvate + AH2. Its function is as follows. Catalyzes the conversion of L-lactate to pyruvate. Is coupled to the respiratory chain. The polypeptide is L-lactate dehydrogenase (Pseudomonas aeruginosa (strain UCBPP-PA14)).